We begin with the raw amino-acid sequence, 108 residues long: Evasin P1127 (108 aa).

Positions 1-28 (MEAKTFAFLEIAMFIALGIQTFVAVTDA) are cleaved as a signal peptide. Intrachain disulfides connect Cys41–Cys63, Cys45–Cys65, and Cys56–Cys76. An N-linked (GlcNAc...) asparagine glycan is attached at Asn44. Asn89 carries an N-linked (GlcNAc...) asparagine glycan.

The protein resides in the secreted. Salivary chemokine-binding protein which binds to host chemokines CXCL1, CXCL2, CXCL3, CXCL5 and CXCL8. The polypeptide is Evasin P1127 (Ixodes ricinus (Common tick)).